The primary structure comprises 38 residues: Phi-Lf prophage-derived putative minor coat protein (38 aa).

This Xanthomonas campestris pv. campestris (strain ATCC 33913 / DSM 3586 / NCPPB 528 / LMG 568 / P 25) protein is Phi-Lf prophage-derived putative minor coat protein (gIX-1).